Consider the following 477-residue polypeptide: 3-sulfolactaldehyde dehydrogenase (477 aa).

An NAD(+)-binding site is contributed by 232 to 233; sequence GS. Glu-252 acts as the Proton acceptor in catalysis. Leu-253 serves as a coordination point for NAD(+). The active-site Nucleophile is Cys-286. NAD(+) is bound at residue Glu-380.

Belongs to the aldehyde dehydrogenase family.

It catalyses the reaction (2S)-3-sulfolactaldehyde + NAD(+) + H2O = (2S)-3-sulfolactate + NADH + 2 H(+). Part of the sulfo-TAL (or sulfo-SFT) pathway, a D-sulfoquinovose degradation pathway that produces sulfolactate (SL). Catalyzes the oxidation of 3-sulfolactaldehyde (SLA) to sulfolactate (SL). The polypeptide is 3-sulfolactaldehyde dehydrogenase (Priestia aryabhattai (Bacillus aryabhattai)).